Consider the following 332-residue polypeptide: Heptahelical transmembrane protein 1 (332 aa).

The interval Met-1–Lys-52 is disordered. Over Met-1 to Asn-98 the chain is Cytoplasmic. The span at Pro-26–Gly-37 shows a compositional bias: basic and acidic residues. Residues Thr-38–Lys-52 show a composition bias toward basic residues. Residues Val-99–His-119 traverse the membrane as a helical segment. Topologically, residues His-120–Pro-138 are extracellular. A helical transmembrane segment spans residues Phe-139–Phe-159. At Cys-160–Arg-172 the chain is on the cytoplasmic side. A helical membrane pass occupies residues Ile-173–Ile-193. The Extracellular portion of the chain corresponds to Phe-194–Arg-199. Residues Trp-200–Phe-220 form a helical membrane-spanning segment. Residues Thr-221 to Arg-233 are Cytoplasmic-facing. The helical transmembrane segment at Ala-234–Val-254 threads the bilayer. Residues Asn-255–Asn-262 lie on the Extracellular side of the membrane. The chain crosses the membrane as a helical span at residues Val-263–Val-283. The Cytoplasmic portion of the chain corresponds to Gly-284–Gln-303. A helical membrane pass occupies residues Ile-304–Leu-324. Residues Asp-325–Cys-332 lie on the Extracellular side of the membrane.

This sequence belongs to the ADIPOR family. As to quaternary structure, interacts (via N-terminus) with SCRM/ICE1. As to expression, expressed in roots, hypocotyls, vasculature of cotyledons and leaves, hydathodes and guard cells. In reproductive organs, expressed in trichomes, veins of sepals, stamens and stigmata of pistils.

The protein resides in the membrane. May act as a negative regulator of abscisic acid (ABA)-mediated osmotic stress signaling and function in cross-talk between cold and osmotic signaling. This is Heptahelical transmembrane protein 1 (HHP1) from Arabidopsis thaliana (Mouse-ear cress).